We begin with the raw amino-acid sequence, 445 residues long: Xylose isomerase (445 aa).

Active-site residues include His-99 and Asp-102. Positions 230, 266, 269, 294, 305, 307, and 337 each coordinate Mg(2+).

It belongs to the xylose isomerase family. Homotetramer. The cofactor is Mg(2+).

The protein resides in the cytoplasm. The enzyme catalyses alpha-D-xylose = alpha-D-xylulofuranose. The protein is Xylose isomerase of Geobacillus thermodenitrificans (strain NG80-2).